The chain runs to 87 residues: Small ribosomal subunit protein bS20 (87 aa).

The disordered stretch occupies residues 1–22 (MANIKSQIKRIGTNKKAQERNK).

It belongs to the bacterial ribosomal protein bS20 family.

In terms of biological role, binds directly to 16S ribosomal RNA. This Clavibacter sepedonicus (Clavibacter michiganensis subsp. sepedonicus) protein is Small ribosomal subunit protein bS20.